A 527-amino-acid chain; its full sequence is Zinc finger protein 35 (527 aa).

The globular domain stretch occupies residues 9 to 221; sequence MALAPWGPVK…NPKTQLGQKP (213 aa). The tract at residues 16-38 is disordered; sequence PVKVKKEEEEEENFPGQASSQQV. Residues Lys20, Lys21, Lys99, Lys117, Lys125, Lys144, Lys158, Lys189, and Lys214 each participate in a glycyl lysine isopeptide (Lys-Gly) (interchain with G-Cter in SUMO2) cross-link. 2 consecutive C2H2-type zinc fingers follow at residues 222–244 and 250–272; these read FTCS…QRIH and FECH…QRIH. A Glycyl lysine isopeptide (Lys-Gly) (interchain with G-Cter in SUMO2) cross-link involves residue Lys276. 9 C2H2-type zinc fingers span residues 278–300, 306–328, 334–356, 362–384, 390–412, 418–440, 446–468, 474–496, and 502–524; these read YVCS…QKIH, FKCN…QKVH, YECN…QRIH, FACN…QRSH, YECK…QRIH, YDCS…QRIH, YVCN…QRIH, YTCN…QRTH, and YECE…HRTH.

It belongs to the krueppel C2H2-type zinc-finger protein family.

The protein localises to the nucleus. In terms of biological role, may be involved in transcriptional regulation. Involved in cell differentiation and/or proliferation. The chain is Zinc finger protein 35 (ZNF35) from Homo sapiens (Human).